The chain runs to 2211 residues: Activating signal cointegrator 1 complex subunit 3 (2211 aa).

Residues 495–678 enclose the Helicase ATP-binding 1 domain; that stretch reads ETAYNTNENM…FLHVNPYIGL (184 aa). 508–515 lines the ATP pocket; the sequence is APTGAGKT. The DEVH box signature appears at 620 to 623; that stretch reads DEVH. A Helicase C-terminal 1 domain is found at 717–923; it reads VLKQIMAGHQ…GTVTNVEEAV (207 aa). An SEC63 1 domain is found at 987 to 1296; the sequence is STDLGRTASH…GAEAVCIINF (310 aa). A Helicase ATP-binding 2 domain is found at 1345–1520; sequence HTLYHTDCNV…WLNINQMGLF (176 aa). 1358-1365 is an ATP binding site; sequence APTGSGKT. The DEIH box signature appears at 1462–1465; that stretch reads DEIH. The Helicase C-terminal 2 domain occupies 1553-1760; it reads PAFQAIRSHS…GTITSKQDAM (208 aa). One can recognise an SEC63 2 domain in the interval 1821-2184; it reads PLTYGRIASY…YLGMDQQYDI (364 aa).

This sequence belongs to the helicase family.

It is found in the nucleus. It localises to the nucleus speckle. Its subcellular location is the cytoplasm. The protein localises to the cytosol. The catalysed reaction is Couples ATP hydrolysis with the unwinding of duplex DNA by translocating in the 3'-5' direction.. It carries out the reaction ATP + H2O = ADP + phosphate + H(+). In terms of biological role, 3'-5' DNA helicase involved in repair of alkylated DNA. Promotes DNA unwinding to generate single-stranded substrate needed for ALKBH3, enabling ALKBH3 to process alkylated N3-methylcytosine (3mC) within double-stranded regions. Also involved in activation of the ribosome quality control (RQC) pathway, a pathway that degrades nascent peptide chains during problematic translation. Drives the splitting of stalled ribosomes. In Gallus gallus (Chicken), this protein is Activating signal cointegrator 1 complex subunit 3 (ascc3).